The chain runs to 97 residues: Co-chaperonin GroES (97 aa).

The protein belongs to the GroES chaperonin family. Heptamer of 7 subunits arranged in a ring. Interacts with the chaperonin GroEL.

The protein resides in the cytoplasm. Functionally, together with the chaperonin GroEL, plays an essential role in assisting protein folding. The GroEL-GroES system forms a nano-cage that allows encapsulation of the non-native substrate proteins and provides a physical environment optimized to promote and accelerate protein folding. GroES binds to the apical surface of the GroEL ring, thereby capping the opening of the GroEL channel. The protein is Co-chaperonin GroES of Klebsiella aerogenes (Enterobacter aerogenes).